The sequence spans 729 residues: Sodium-dependent neutral amino acid transporter B(0)AT2 (729 aa).

Topologically, residues 1 to 69 are cytoplasmic; that stretch reads MPKNSKVVKR…ERPAWNSKLQ (69 aa). Residues Ser25 and Ser55 each carry the phosphoserine modification. The next 3 membrane-spanning stretches (helical) occupy residues 70–90, 98–117, and 142–162; these read YILAQVGFSVGLGNVWRFPYL, AYLLPYLILLLVIGIPLFFL, and GIGFASCVVCYFVALYYNVII. Residues 163–225 lie on the Extracellular side of the membrane; that stretch reads GWTLFYFSQS…SSISESGGLN (63 aa). Asn187 carries an N-linked (GlcNAc...) asparagine glycan. Transmembrane regions (helical) follow at residues 226-244, 253-270, 306-323, and 335-356; these read WKMTGCLLAAWVMVCLAMI, IMYFSSLFPYVVLICFLI, VFFALGLGFGGVIAFSSY, and VLVSFINFFTSVLATLVVFAVL. Topologically, residues 357-452 are extracellular; that stretch reads GFKANIVNEK…FIAFTEAMTH (96 aa). Residues Asn383 and Asn394 are each glycosylated (N-linked (GlcNAc...) asparagine). The next 5 membrane-spanning stretches (helical) occupy residues 453 to 472, 496 to 514, 530 to 550, 571 to 592, and 620 to 642; these read FPASPFWSVMFFLMLINLGL, ILTVICCLLAFCIGLMFVQ, TLPLLIVVILENIAVSFVYGI, YMWKYISPLMLVTLLIASIVNM, and VVCFSLMVLAILPVPVVFVIRRC. At 643–729 the chain is on the cytoplasmic side; that stretch reads NLIDDSSGNL…DMPDMPESDL (87 aa). A phosphoserine mark is found at Ser687, Ser699, and Ser701.

It belongs to the sodium:neurotransmitter symporter (SNF) (TC 2.A.22) family. SLC6A15 subfamily. In terms of tissue distribution, widely distributed in the central nervous system, including the olfactory bulb, the hypothalamus, the cerebral cortex, the hippocampus, and the cerebellum. In addition, intense expression is found in the motor nuclei including the oculomotor nucleus, abducens nucleus, trigeminal motor nucleus, facial nucleus, hypoglossal nucleus and ventral horn of spinal cord. Intense hybridization signals are also observed in the nuclei containing monoaminergic neurons, such as locus coeruleus, the substantia nigra pars compacta, the ventral tegmental area, the dorsal raphe nucleus and the median raphe nucleus.

Its subcellular location is the membrane. It catalyses the reaction L-leucine(in) + Na(+)(in) = L-leucine(out) + Na(+)(out). It carries out the reaction L-isoleucine(in) + Na(+)(in) = L-isoleucine(out) + Na(+)(out). The catalysed reaction is L-methionine(in) + Na(+)(in) = L-methionine(out) + Na(+)(out). The enzyme catalyses L-proline(in) + Na(+)(in) = L-proline(out) + Na(+)(out). It catalyses the reaction L-alanine(in) + Na(+)(in) = L-alanine(out) + Na(+)(out). It carries out the reaction L-asparagine(in) + Na(+)(in) = L-asparagine(out) + Na(+)(out). The catalysed reaction is L-valine(in) + Na(+)(in) = L-valine(out) + Na(+)(out). The enzyme catalyses L-cysteine(in) + Na(+)(in) = L-cysteine(out) + Na(+)(out). It catalyses the reaction L-glutamine(in) + Na(+)(in) = L-glutamine(out) + Na(+)(out). It carries out the reaction L-serine(in) + Na(+)(in) = L-serine(out) + Na(+)(out). The catalysed reaction is L-threonine(in) + Na(+)(in) = L-threonine(out) + Na(+)(out). The enzyme catalyses L-pipecolate(in) + Na(+)(in) = L-pipecolate(out) + Na(+)(out). It catalyses the reaction L-phenylalanine(in) + Na(+)(in) = L-phenylalanine(out) + Na(+)(out). In terms of biological role, functions as a sodium-dependent neutral amino acid transporter. Exhibits preference for the branched-chain amino acids, particularly leucine, valine and isoleucine and methionine. Can also transport low-affinity substrates such as alanine, phenylalanine, glutamine and pipecolic acid. Mediates the saturable, pH-sensitive and electrogenic cotransport of proline and sodium ions with a stoichiometry of 1:1. May have a role as transporter for neurotransmitter precursors into neurons. In contrast to other members of the neurotransmitter transporter family, does not appear to be chloride-dependent. This Rattus norvegicus (Rat) protein is Sodium-dependent neutral amino acid transporter B(0)AT2 (Slc6a15).